A 397-amino-acid chain; its full sequence is Lysophospholipid transporter LplT (397 aa).

Over 1 to 17 (MSESVHTNTSLWSKGMK) the chain is Periplasmic. The chain crosses the membrane as a helical span at residues 18–38 (AVIVAQFLSAFGDNALLFATL). At 39-52 (ALLKAQFYPEWSQP) the chain is on the cytoplasmic side. The chain crosses the membrane as a helical span at residues 53–73 (ILQMVFVGAYILFAPFVGQVA). Residues 74–90 (DSFAKGRVMMFANGLKL) are Periplasmic-facing. Residues 91–111 (LGAASICFGINPFLGYTLVGV) form a helical membrane-spanning segment. The Cytoplasmic portion of the chain corresponds to 112–144 (GAAAYSPAKYGILGELTTGSKLVKANGLMEAST). The chain crosses the membrane as a helical span at residues 145–165 (IAAILLGSVAGGVLADWHVLV). Residue Ala-166 is a topological domain, periplasmic. A helical transmembrane segment spans residues 167–187 (LAACALAYGGAVVANIYIPKL). Residues 188 to 226 (AAARPGQSWNLINMTRSFLNACTSLWCNGETRFSLVGTS) lie on the Cytoplasmic side of the membrane. Residues 227-247 (LFWGAGVTLRFLLVLWVPVAL) traverse the membrane as a helical segment. Over 248 to 256 (GITDNATPT) the chain is Periplasmic. The chain crosses the membrane as a helical span at residues 257 to 277 (YLNAMVAIGIVVGAGAAAKLV). At 278 to 280 (TLE) the chain is on the cytoplasmic side. A helical membrane pass occupies residues 281-301 (TVSRCMPAGILIGVVVLIFSL). At 302 to 304 (QHE) the chain is on the periplasmic side. Residues 305 to 325 (LLPAYALLMLIGVLGGFFVVP) traverse the membrane as a helical segment. Residues 326–343 (LNALLQERGKKSVGAGNA) lie on the Cytoplasmic side of the membrane. Residues 344 to 364 (IAVQNLGENSAMLLMLGIYSL) form a helical membrane-spanning segment. The Periplasmic segment spans residues 365 to 366 (AV). The helical transmembrane segment at 367-387 (MVGIPVVPIGIGFGALFALAI) threads the bilayer. At 388–397 (TALWIWQRRH) the chain is on the cytoplasmic side.

The protein belongs to the major facilitator superfamily. LplT (TC 2.A.1.42) family.

The protein localises to the cell inner membrane. In terms of biological role, catalyzes the facilitated diffusion of 2-acyl-glycero-3-phosphoethanolamine (2-acyl-GPE) into the cell. This is Lysophospholipid transporter LplT from Shigella dysenteriae serotype 1 (strain Sd197).